Reading from the N-terminus, the 1061-residue chain is Calcium-transporting ATPase 4, endoplasmic reticulum-type (1061 aa).

Residues 1–21 (MGKGGEDCGNKQTNSSELVKS) form a disordered region. At 1 to 70 (MGKGGEDCGN…NELEKPEGTS (70 aa)) the chain is on the cytoplasmic side. A helical transmembrane segment spans residues 71–91 (IFKLILEQFNDTLVRILLAAA). Residues 92 to 115 (VISFVLAFFDGDEGGEMGITAFVE) lie on the Lumenal side of the membrane. A helical transmembrane segment spans residues 116–135 (PLVIFLILIVNAIVGIWQET). Topologically, residues 136 to 278 (NAEKALEALK…EEDTPLKKKL (143 aa)) are cytoplasmic. The chain crosses the membrane as a helical span at residues 279–298 (NEFGEVLTMIIGLICALVWL). Over 299 to 327 (INVKYFLSWEYVDGWPRNFKFSFEKCTYY) the chain is Lumenal. The helical transmembrane segment at 328–345 (FEIAVALAVAAIPEGLPA) threads the bilayer. Residues Val-336, Ala-337, Ile-339, and Glu-341 each coordinate Ca(2+). Topologically, residues 346-786 (VITTCLALGT…GEGRSIYNNM (441 aa)) are cytoplasmic. Asp-383 serves as the catalytic 4-aspartylphosphate intermediate. Mg(2+) contacts are provided by Asp-731 and Asp-735. Residues 787–806 (KAFIRYMISSNIGEVASIFL) traverse the membrane as a helical segment. Ca(2+) contacts are provided by Asn-797 and Glu-800. The Lumenal portion of the chain corresponds to 807-816 (TAALGIPEGM). The chain crosses the membrane as a helical span at residues 817 to 837 (IPVQLLWVNLVTDGPPATALG). Ca(2+) contacts are provided by Asn-825, Thr-828, and Asp-829. Over 838–857 (FNPPDKDIMKKPPRRSDDSL) the chain is Cytoplasmic. The helical transmembrane segment at 858-880 (ITAWILFRYMVIGLYVGVATVGV) threads the bilayer. At 881–950 (FIIWYTHNSF…YFQQGKIKAS (70 aa)) the chain is on the lumenal side. A helical transmembrane segment spans residues 951 to 970 (TLSLSVLVAIEMFNSLNALS). Glu-961 contributes to the Ca(2+) binding site. Residues 971-983 (EDGSLVTMPPWVN) are Cytoplasmic-facing. Residues 984-1002 (PWLLLAMAVSFGLHFVILY) form a helical membrane-spanning segment. The Lumenal segment spans residues 1003-1017 (VPFLAQVFGIVPLSL). The chain crosses the membrane as a helical span at residues 1018 to 1038 (NEWLLVLAVSLPVILIDEVLK). Over 1039 to 1061 (FVGRCTSGYRYSPRTPSAKQKEE) the chain is Cytoplasmic.

Belongs to the cation transport ATPase (P-type) (TC 3.A.3) family. Type IIA subfamily.

Its subcellular location is the membrane. The catalysed reaction is Ca(2+)(in) + ATP + H2O = Ca(2+)(out) + ADP + phosphate + H(+). Its function is as follows. This magnesium-dependent enzyme catalyzes the hydrolysis of ATP coupled with the translocation of calcium from the cytosol to an endomembrane compartment. In Arabidopsis thaliana (Mouse-ear cress), this protein is Calcium-transporting ATPase 4, endoplasmic reticulum-type (ECA4).